The following is a 357-amino-acid chain: MKLTTNYNDNNYDIFVEYNVLNKDYDFNYYDKRIALIDESVYRLHQQKIDLFLNKHSIFKLLIPGGEQVKTMHHYSTVVEKLLSMHVTRHSCLFAIGGGATGDFTGFVAATLLRGIHFIQVPTTILAHDASIGGKTGINASSGKNLIGAFKRPDMVLYDLDFLETLSQIEKLSGFAEIIKHVLLNANGHISKSETVLEIMHDVKDEVCLSELHAIDKWITFGIQTKMKVVHDDEFESGVRKFLNFGHTFGHAIEFHHKLPHGIAVMHGMIYALLLSDVTESDIMSLMRWMHRLGLKKLVYDNFDIYYELMRQDKKNEANEINFVLYYENNGYKVEQVDVKRLRKAFERLRKLEGELL.

Residues 99–103 (GATGD), 123–124 (TT), Lys135, Lys144, and 162–165 (FLET) contribute to the NAD(+) site. Residues Glu177, His247, and His261 each contribute to the Zn(2+) site.

This sequence belongs to the sugar phosphate cyclases superfamily. Dehydroquinate synthase family. It depends on Co(2+) as a cofactor. Zn(2+) is required as a cofactor. NAD(+) serves as cofactor.

It localises to the cytoplasm. The catalysed reaction is 7-phospho-2-dehydro-3-deoxy-D-arabino-heptonate = 3-dehydroquinate + phosphate. It participates in metabolic intermediate biosynthesis; chorismate biosynthesis; chorismate from D-erythrose 4-phosphate and phosphoenolpyruvate: step 2/7. Functionally, catalyzes the conversion of 3-deoxy-D-arabino-heptulosonate 7-phosphate (DAHP) to dehydroquinate (DHQ). This Macrococcus caseolyticus (strain JCSC5402) (Macrococcoides caseolyticum) protein is 3-dehydroquinate synthase.